Here is a 457-residue protein sequence, read N- to C-terminus: Metacaspase-1 (457 aa).

The segment at 1–149 is disordered; sequence MSWNQYPGGG…PQLQGQGGQS (149 aa). Over residues 7 to 18 the composition is skewed to gly residues; sequence PGGGHHQQGGYG. Pro residues predominate over residues 20–56; that stretch reads RPPPPQWAQQGPPPPPNMGYRPPPPPQAYYNNPPPPQ. Low complexity predominate over residues 57–83; the sequence is QYQRPAPQQNGYQQGGYQQQQQSQGNY. Residues H247 and C303 contribute to the active site.

This sequence belongs to the peptidase C14B family.

Involved in cell death (apoptosis). In Cryptococcus neoformans var. neoformans serotype D (strain JEC21 / ATCC MYA-565) (Filobasidiella neoformans), this protein is Metacaspase-1 (MCA1).